A 122-amino-acid polypeptide reads, in one-letter code: Sarcocystatin-A (122 aa).

The first 20 residues, 1-20, serve as a signal peptide directing secretion; it reads MKYVLILCVITLATVAYAQP. Pyrrolidone carboxylic acid is present on Gln21. The short motif at 67–71 is the Secondary area of contact element; sequence QVVSG.

This sequence belongs to the cystatin family.

Functionally, selectively inhibits the activity of cysteine proteinase of hemocytes, protecting developing adult tissue in pupae from attack by the proteinase. The protein is Sarcocystatin-A of Sarcophaga peregrina (Flesh fly).